We begin with the raw amino-acid sequence, 399 residues long: Acetate kinase 2 (399 aa).

Asparagine 10 serves as a coordination point for Mg(2+). Lysine 17 contacts ATP. Arginine 89 contacts substrate. Aspartate 146 serves as the catalytic Proton donor/acceptor. ATP-binding positions include 206–210, 281–283, and 329–333; these read HLGNG, DCR, and GIGEN. Glutamate 384 is a Mg(2+) binding site.

This sequence belongs to the acetokinase family. As to quaternary structure, homodimer. Mg(2+) is required as a cofactor. The cofactor is Mn(2+).

Its subcellular location is the cytoplasm. The catalysed reaction is acetate + ATP = acetyl phosphate + ADP. It functions in the pathway metabolic intermediate biosynthesis; acetyl-CoA biosynthesis; acetyl-CoA from acetate: step 1/2. Functionally, catalyzes the formation of acetyl phosphate from acetate and ATP. Can also catalyze the reverse reaction. The chain is Acetate kinase 2 from Neisseria meningitidis serogroup A / serotype 4A (strain DSM 15465 / Z2491).